The sequence spans 532 residues: Methionine--tRNA ligase (532 aa).

Positions 16–26 match the 'HIGH' region motif; sequence YYVNDVPHLGS. The Zn(2+) site is built by Cys-131, Cys-134, Cys-149, and His-152. Residues 305–309 carry the 'KMSKS' region motif; sequence KMGKS. Lys-308 provides a ligand contact to ATP.

The protein belongs to the class-I aminoacyl-tRNA synthetase family. MetG type 2A subfamily. In terms of assembly, monomer. It depends on Zn(2+) as a cofactor.

It is found in the cytoplasm. The catalysed reaction is tRNA(Met) + L-methionine + ATP = L-methionyl-tRNA(Met) + AMP + diphosphate. Is required not only for elongation of protein synthesis but also for the initiation of all mRNA translation through initiator tRNA(fMet) aminoacylation. This chain is Methionine--tRNA ligase (metG), found in Synechocystis sp. (strain ATCC 27184 / PCC 6803 / Kazusa).